Here is a 279-residue protein sequence, read N- to C-terminus: Rhamnulose-1-phosphate aldolase (279 aa).

Residue Glu115 is part of the active site. Positions 138, 140, and 209 each coordinate Zn(2+).

Belongs to the aldolase class II family. RhaD subfamily. Zn(2+) serves as cofactor.

The protein resides in the cytoplasm. It catalyses the reaction L-rhamnulose 1-phosphate = (S)-lactaldehyde + dihydroxyacetone phosphate. The protein operates within carbohydrate degradation; L-rhamnose degradation; glycerone phosphate from L-rhamnose: step 3/3. Catalyzes the reversible cleavage of L-rhamnulose-1-phosphate to dihydroxyacetone phosphate (DHAP) and L-lactaldehyde. This chain is Rhamnulose-1-phosphate aldolase, found in Enterococcus faecalis (strain ATCC 700802 / V583).